A 1113-amino-acid chain; its full sequence is Atrial natriuretic peptide-converting enzyme (1113 aa).

At 1–112 the chain is on the cytoplasmic side; the sequence is MGRVSFSVRV…QKLVTANLLR (112 aa). Residues 113-133 form a helical; Signal-anchor for type II membrane protein membrane-spanning segment; sequence FLLLVLIPCICALIVLLAILL. Residues 134–1113 are Extracellular-facing; it reads SFVGTLKRVY…QTFLQKKSQG (980 aa). N-linked (GlcNAc...) asparagine glycosylation is found at N147, N202, and N208. Residues 176 to 202 form a disordered region; sequence APSLPPSQSTPAWTPRAPSPEDQSHRN. An FZ 1 domain is found at 201–327; that stretch reads RNTSTCMNIT…SSVRKSCFSL (127 aa). Disulfide bonds link C206-C266, C214-C259, C250-C290, C279-C324, C283-C307, C337-C350, C345-C363, and C357-C372. N298 and N317 each carry an N-linked (GlcNAc...) asparagine glycan. LDL-receptor class A domains follow at residues 336 to 372, 373 to 408, 409 to 445, and 446 to 483; these read LCGG…EAHC, NCSK…EQNC, DCNL…EVNC, and SCHS…ENCS. An N-linked (GlcNAc...) asparagine glycan is attached at N373. Cystine bridges form between C374–C386, C381–C399, C393–C408, C410–C423, C418–C436, C430–C445, C447–C460, C455–C473, and C467–C482. N411 carries an N-linked (GlcNAc...) asparagine glycan. N444 carries N-linked (GlcNAc...) asparagine glycosylation. Residues N481, N519, and N537 are each glycosylated (N-linked (GlcNAc...) asparagine). Residues 518–641 form the FZ 2 domain; sequence SNCSQCEPIT…SSDNQTCLLP (124 aa). Cystine bridges form between C523–C586, C531–C579, C570–C608, C597–C638, C601–C625, C648–C660, C655–C673, C667–C682, C684–C698, C692–C711, C705–C720, C723–C735, C730–C748, and C742–C757. N635 carries an N-linked (GlcNAc...) asparagine glycan. 3 LDL-receptor class A domains span residues 647 to 682, 683 to 721, and 722 to 757; these read ECSP…EENC, GCKE…KNCS, and FCQD…EWGC. N-linked (GlcNAc...) asparagine glycosylation is present at N719. An SRCR domain is found at 758-853; it reads VTLSKNGNSS…SRSEISLLCS (96 aa). N765 and N828 each carry an N-linked (GlcNAc...) asparagine glycan. Cystine bridges form between C782-C884, C857-C979, C895-C911, C993-C1058, C1022-C1037, and C1048-C1077. The Peptidase S1 domain maps to 869-1102; sequence ILGGRTSRPG…FVGWIERQIY (234 aa). Active-site charge relay system residues include H910 and D959. Residue N970 is glycosylated (N-linked (GlcNAc...) asparagine). S1052 serves as the catalytic Charge relay system. N1089 carries N-linked (GlcNAc...) asparagine glycosylation.

It belongs to the peptidase S1 family. In terms of processing, N-glycosylated; required for processing and activation. Post-translationally, activated through proteolytic processing by a trypsin-like protease; cleaved into a N-terminal propeptide and an activated corin protease fragment. Atrial natriuretic peptide-converting enzyme, 180 kDa soluble fragment is produced by cleavage by ADAM10. Cleavage by ADAM10 to produce soluble 180 kDa soluble fragment takes place after the transmembrane region and before FZ 1. A disulfide bond links the activated corin protease fragment and the N-terminal propeptide. The disulfide bond also links the activated corin protease fragment with Atrial natriuretic peptide-converting enzyme, 180 kDa soluble fragment. As to expression, highly expressed in heart. Also expressed in pregnant uterus.

It localises to the cell membrane. It is found in the secreted. Serine-type endopeptidase involved in atrial natriuretic peptide (NPPA) processing. Converts through proteolytic cleavage the non-functional propeptide NPPA into the active hormone, thereby regulating blood pressure in heart and promoting natriuresis, diuresis and vasodilation. Proteolytic cleavage of pro-NPPA also plays a role in female pregnancy by promoting trophoblast invasion and spiral artery remodeling in uterus. Also acts as a regulator of sodium reabsorption in kidney. May also process pro-NPPB the B-type natriuretic peptide. This chain is Atrial natriuretic peptide-converting enzyme (Corin), found in Mus musculus (Mouse).